The sequence spans 102 residues: Citrate lyase acyl carrier protein (102 aa).

The residue at position 14 (S14) is an O-(phosphoribosyl dephospho-coenzyme A)serine.

Belongs to the CitD family. In terms of assembly, oligomer with a subunit composition of (alpha,beta,gamma)6.

It localises to the cytoplasm. Covalent carrier of the coenzyme of citrate lyase. This Serratia proteamaculans (strain 568) protein is Citrate lyase acyl carrier protein.